Here is a 166-residue protein sequence, read N- to C-terminus: Protein-export protein SecB (166 aa).

It belongs to the SecB family. As to quaternary structure, homotetramer, a dimer of dimers. One homotetramer interacts with 1 SecA dimer.

Its subcellular location is the cytoplasm. In terms of biological role, one of the proteins required for the normal export of preproteins out of the cell cytoplasm. It is a molecular chaperone that binds to a subset of precursor proteins, maintaining them in a translocation-competent state. It also specifically binds to its receptor SecA. The sequence is that of Protein-export protein SecB from Cereibacter sphaeroides (strain ATCC 17029 / ATH 2.4.9) (Rhodobacter sphaeroides).